An 88-amino-acid chain; its full sequence is ATP synthase epsilon chain (88 aa).

The protein belongs to the ATPase epsilon chain family. F-type ATPases have 2 components, CF(1) - the catalytic core - and CF(0) - the membrane proton channel. CF(1) has five subunits: alpha(3), beta(3), gamma(1), delta(1), epsilon(1). CF(0) has three main subunits: a, b and c.

Its subcellular location is the cell inner membrane. Produces ATP from ADP in the presence of a proton gradient across the membrane. The sequence is that of ATP synthase epsilon chain (atpC) from Chlorobaculum tepidum (strain ATCC 49652 / DSM 12025 / NBRC 103806 / TLS) (Chlorobium tepidum).